Consider the following 460-residue polypeptide: Telomere-binding protein homolog (460 aa).

It belongs to the telombin family.

It is found in the nucleus. It localises to the chromosome. The protein localises to the telomere. Its function is as follows. May bind telomeric T4G4 sequences. This chain is Telomere-binding protein homolog, found in Euplotes crassus.